We begin with the raw amino-acid sequence, 607 residues long: Elongation factor 4 (607 aa).

In terms of domain architecture, tr-type G spans 11 to 193 (SKIRNFSIIA…QIVEKVPAPT (183 aa)). Residues 23–28 (DHGKST) and 140–143 (NKID) contribute to the GTP site.

Belongs to the TRAFAC class translation factor GTPase superfamily. Classic translation factor GTPase family. LepA subfamily.

It is found in the cell membrane. It catalyses the reaction GTP + H2O = GDP + phosphate + H(+). Required for accurate and efficient protein synthesis under certain stress conditions. May act as a fidelity factor of the translation reaction, by catalyzing a one-codon backward translocation of tRNAs on improperly translocated ribosomes. Back-translocation proceeds from a post-translocation (POST) complex to a pre-translocation (PRE) complex, thus giving elongation factor G a second chance to translocate the tRNAs correctly. Binds to ribosomes in a GTP-dependent manner. The chain is Elongation factor 4 from Bacillus anthracis (strain A0248).